The primary structure comprises 517 residues: Cytochrome P450 monooxygenase stcB (517 aa).

Residue C461 coordinates heme.

This sequence belongs to the cytochrome P450 family. The cofactor is heme.

Its pathway is mycotoxin biosynthesis; sterigmatocystin biosynthesis. Cytochrome P450 monooxygenase; part of the gene cluster that mediates the biosynthesis of sterigmatocystin (ST), a polyketide-derived furanocoumarin which is part of the most toxic and carcinogenic compounds among the known mycotoxins. The first step in the biosynthesis of sterigmatocystin is the production of hexanoate by the fatty acid synthase (FAS) units stcJ and stcK. The polyketide backbone is assembled by the non-reducing polyketide synthase stcA by condensation of the starter hexanoyl-CoA and 7 malonyl-CoA extender units followed by cyclization and release of norsolorinic acid. Norsolorinic acid is the first stable intermediate in the biosynthesis of sterigmatocystin and is converted into averantin (AVN) by the ketoreductase stcE which reduces the hexanoate ketone to an alcohol. Averantin is then oxidized into 5'-hydroxyaverantin (HAVN) by the cytochrome P450 monooxygenase stcF. 5'-hydroxyaverantin is further converted to 5'-oxyaverantin (OAVN) by the 5'-hydroxyaverantin dehydrogenase stcG. The next step is the conversion of OAVN into averufin (AVF) which is catalyzed by a yet to be identified enzyme. The cytochrome P450 monooxygenase stcB and the flavin-binding monooxygenase stcW are both required for the conversion of averufin to 1-hydroxyversicolorone. The esterase stcI probably catalyzes the formation of versiconal hemiacetal acetate from 1-hydroxyversicolorone. The oxydoreductase stcN then probably catalyzes the biosynthetic step from versiconal to versicolorin B (VERB). The next step is performed by the versicolorin B desaturase stcL to produce versicolorin A (VERA). The ketoreductase stcU and the cytochrome P450 monooxygenase stcS are involved in the conversion of versicolorin A to demethylsterigmatocystin. The Baeyer-Villiger oxidas stcQ and the reductase stcR might be involved in the biosynthetic step from versicolorin A to demethylsterigmatocystin. The final step in the biosynthesis of sterigmatocystin is the methylation of demethylsterigmatocystin catalyzed by the methyltransferase stcP. The polypeptide is Cytochrome P450 monooxygenase stcB (Emericella nidulans (strain FGSC A4 / ATCC 38163 / CBS 112.46 / NRRL 194 / M139) (Aspergillus nidulans)).